Consider the following 326-residue polypeptide: ATP synthase gamma chain (326 aa).

Belongs to the ATPase gamma chain family. In terms of assembly, F-type ATPases have 2 components, CF(1) - the catalytic core - and CF(0) - the membrane proton channel. CF(1) has five subunits: alpha(3), beta(3), gamma(1), delta(1), epsilon(1). CF(0) has three main subunits: a, b and c.

The protein resides in the cell membrane. Its function is as follows. Produces ATP from ADP in the presence of a proton gradient across the membrane. The gamma chain is believed to be important in regulating ATPase activity and the flow of protons through the CF(0) complex. The protein is ATP synthase gamma chain of Rhodococcus opacus (strain B4).